Here is a 728-residue protein sequence, read N- to C-terminus: Methylmalonyl-CoA mutase large subunit (728 aa).

7 residues coordinate (R)-methylmalonyl-CoA: Tyr75, Met78, Arg82, Thr85, Arg87, Tyr89, and Ser114. Cob(II)alamin-binding residues include Phe117 and Ala139. The (R)-methylmalonyl-CoA site is built by Thr195 and Gln197. The cob(II)alamin site is built by Val206 and Arg207. (R)-methylmalonyl-CoA is bound by residues Arg207, His244, Arg283, and Ser285. Cob(II)alamin contacts are provided by Gly333, Glu370, Ala373, Gly609, His610, Asp611, Arg612, Ser655, Leu657, Gly686, and Thr709. The 132-residue stretch at 597-728 folds into the B12-binding domain; that stretch reads RPRILLAKMG…VKKLRASLDA (132 aa).

Belongs to the methylmalonyl-CoA mutase family. In terms of assembly, heterodimer of an alpha and a beta chain. The cofactor is adenosylcob(III)alamin.

It catalyses the reaction (R)-methylmalonyl-CoA = succinyl-CoA. In terms of biological role, catalyzes the reversible conversion of succinyl-CoA to (R)-methylmalonyl-CoA through a radical mechanism. Is involved in the fermentation of pyruvate to propanoate that occurs in Propionibacteria. The polypeptide is Methylmalonyl-CoA mutase large subunit (mutB) (Propionibacterium freudenreichii subsp. shermanii).